The following is a 694-amino-acid chain: Putative serine/threonine-protein kinase R679 (694 aa).

Positions 167–548 (ITKNKTVGKG…ITNILKHLFT (382 aa)) constitute a Protein kinase domain. ATP contacts are provided by residues 173–181 (VGKGAAGIA) and K196. D395 (proton acceptor) is an active-site residue.

This sequence belongs to the protein kinase superfamily. Ser/Thr protein kinase family.

It localises to the virion. It catalyses the reaction L-seryl-[protein] + ATP = O-phospho-L-seryl-[protein] + ADP + H(+). It carries out the reaction L-threonyl-[protein] + ATP = O-phospho-L-threonyl-[protein] + ADP + H(+). This Acanthamoeba polyphaga (Amoeba) protein is Putative serine/threonine-protein kinase R679.